A 411-amino-acid polypeptide reads, in one-letter code: L-cysteine:1D-myo-inositol 2-amino-2-deoxy-alpha-D-glucopyranoside ligase (411 aa).

Cysteine 43 provides a ligand contact to Zn(2+). L-cysteinyl-5'-AMP is bound by residues 43–46, threonine 58, and 81–83; these read CGIT and NVT. The 'HIGH' region motif lies at 45 to 55; the sequence is ITPYDATHLGH. The 'ERGGDP' region motif lies at 186–191; sequence QRGGDP. Position 226 (tryptophan 226) interacts with L-cysteinyl-5'-AMP. Residue cysteine 230 coordinates Zn(2+). 248–250 is a binding site for L-cysteinyl-5'-AMP; it reads GSD. Histidine 255 contributes to the Zn(2+) binding site. Isoleucine 282 provides a ligand contact to L-cysteinyl-5'-AMP. The 'KMSKS' region signature appears at 288–292; the sequence is KMSKS.

It belongs to the class-I aminoacyl-tRNA synthetase family. MshC subfamily. In terms of assembly, monomer. Requires Zn(2+) as cofactor.

It catalyses the reaction 1D-myo-inositol 2-amino-2-deoxy-alpha-D-glucopyranoside + L-cysteine + ATP = 1D-myo-inositol 2-(L-cysteinylamino)-2-deoxy-alpha-D-glucopyranoside + AMP + diphosphate + H(+). Catalyzes the ATP-dependent condensation of GlcN-Ins and L-cysteine to form L-Cys-GlcN-Ins. In Mycobacterium marinum (strain ATCC BAA-535 / M), this protein is L-cysteine:1D-myo-inositol 2-amino-2-deoxy-alpha-D-glucopyranoside ligase.